A 442-amino-acid polypeptide reads, in one-letter code: 5-methylthioadenosine/S-adenosylhomocysteine deaminase (442 aa).

Residues H70 and H72 each contribute to the Zn(2+) site. 2 residues coordinate substrate: E99 and H191. Residue H218 coordinates Zn(2+). Residues E221 and D306 each coordinate substrate. Zn(2+) is bound at residue D306.

The protein belongs to the metallo-dependent hydrolases superfamily. MTA/SAH deaminase family. Zn(2+) serves as cofactor.

The enzyme catalyses S-adenosyl-L-homocysteine + H2O + H(+) = S-inosyl-L-homocysteine + NH4(+). The catalysed reaction is S-methyl-5'-thioadenosine + H2O + H(+) = S-methyl-5'-thioinosine + NH4(+). Its function is as follows. Catalyzes the deamination of 5-methylthioadenosine and S-adenosyl-L-homocysteine into 5-methylthioinosine and S-inosyl-L-homocysteine, respectively. Is also able to deaminate adenosine. This chain is 5-methylthioadenosine/S-adenosylhomocysteine deaminase, found in Nitratidesulfovibrio vulgaris (strain ATCC 29579 / DSM 644 / CCUG 34227 / NCIMB 8303 / VKM B-1760 / Hildenborough) (Desulfovibrio vulgaris).